We begin with the raw amino-acid sequence, 78 residues long: Small ribosomal subunit protein bS18 (78 aa).

The protein belongs to the bacterial ribosomal protein bS18 family. In terms of assembly, part of the 30S ribosomal subunit. Forms a tight heterodimer with protein bS6.

In terms of biological role, binds as a heterodimer with protein bS6 to the central domain of the 16S rRNA, where it helps stabilize the platform of the 30S subunit. The sequence is that of Small ribosomal subunit protein bS18 from Frankia casuarinae (strain DSM 45818 / CECT 9043 / HFP020203 / CcI3).